A 549-amino-acid chain; its full sequence is Cytoplasmic trehalase (549 aa).

Substrate contacts are provided by residues Arg168, 175 to 176, Asn212, 221 to 223, 292 to 294, and Gly324; these read WD, RSQ, and RDE. Active-site proton donor/acceptor residues include Asp326 and Glu509. Glu525 is a binding site for substrate.

The protein belongs to the glycosyl hydrolase 37 family. As to quaternary structure, monomer.

Its subcellular location is the cytoplasm. The catalysed reaction is alpha,alpha-trehalose + H2O = alpha-D-glucose + beta-D-glucose. Its pathway is glycan degradation; trehalose degradation; D-glucose from alpha,alpha-trehalose: step 1/1. Functionally, hydrolyzes trehalose to glucose. Could be involved, in cells returning to low osmolarity conditions, in the utilization of the accumulated cytoplasmic trehalose, which was synthesized in response to high osmolarity. The sequence is that of Cytoplasmic trehalase from Shigella boydii serotype 4 (strain Sb227).